Consider the following 533-residue polypeptide: Bifunctional aspartate aminotransferase and L-aspartate beta-decarboxylase (533 aa).

Positions 115 and 256 each coordinate L-aspartate. K315 carries the N6-(pyridoxal phosphate)lysine modification. R497 is an L-aspartate binding site.

This sequence belongs to the class-I pyridoxal-phosphate-dependent aminotransferase family. In terms of assembly, homododecamer. Requires pyridoxal 5'-phosphate as cofactor.

It carries out the reaction L-aspartate + H(+) = L-alanine + CO2. The catalysed reaction is L-aspartate + 2-oxoglutarate = oxaloacetate + L-glutamate. Bifunctional enzyme that has both L-aspartate decarboxylase and transaminase activity. The polypeptide is Bifunctional aspartate aminotransferase and L-aspartate beta-decarboxylase (Comamonas testosteroni (Pseudomonas testosteroni)).